Reading from the N-terminus, the 428-residue chain is 3-deoxy-D-manno-octulosonic acid transferase (428 aa).

The active-site Proton acceptor is the Glu64. Residues 274 to 275, 316 to 318, and 342 to 345 contribute to the CMP site; these read PR, LGE, and NLIE.

Belongs to the glycosyltransferase group 1 family. Glycosyltransferase 30 subfamily.

The protein resides in the cell inner membrane. The enzyme catalyses lipid IVA (E. coli) + CMP-3-deoxy-beta-D-manno-octulosonate = alpha-Kdo-(2-&gt;6)-lipid IVA (E. coli) + CMP + H(+). It functions in the pathway bacterial outer membrane biogenesis; LPS core biosynthesis. Involved in lipopolysaccharide (LPS) biosynthesis. Catalyzes the transfer of a single 3-deoxy-D-manno-octulosonate (Kdo) residue from CMP-Kdo to lipid IV(A), the tetraacyldisaccharide-1,4'-bisphosphate precursor of lipid A. This is 3-deoxy-D-manno-octulosonic acid transferase (waaA) from Bordetella pertussis.